A 244-amino-acid polypeptide reads, in one-letter code: tRNA (guanine-N(7)-)-methyltransferase (244 aa).

Residues 1–11 (MTDTHVPPPEL) are compositionally biased toward pro residues. Positions 1–23 (MTDTHVPPPELPAAEEGEERPHR) are disordered. Residues glutamate 74, glutamate 99, aspartate 126, and aspartate 149 each contribute to the S-adenosyl-L-methionine site. Residue aspartate 149 is part of the active site. Substrate contacts are provided by residues lysine 153, aspartate 185, and 222-225 (TKFE).

The protein belongs to the class I-like SAM-binding methyltransferase superfamily. TrmB family.

The enzyme catalyses guanosine(46) in tRNA + S-adenosyl-L-methionine = N(7)-methylguanosine(46) in tRNA + S-adenosyl-L-homocysteine. It functions in the pathway tRNA modification; N(7)-methylguanine-tRNA biosynthesis. Its function is as follows. Catalyzes the formation of N(7)-methylguanine at position 46 (m7G46) in tRNA. This chain is tRNA (guanine-N(7)-)-methyltransferase, found in Pseudomonas syringae pv. tomato (strain ATCC BAA-871 / DC3000).